The sequence spans 99 residues: uncharacterized protein (99 aa).

A signal peptide spans 1-17 (MMMNAFFPAMALMVLVG). C18 carries N-palmitoyl cysteine lipidation. A lipid anchor (S-diacylglycerol cysteine) is attached at C18.

Its subcellular location is the cell membrane. This is an uncharacterized protein from Shigella boydii serotype 4 (strain Sb227).